A 1161-amino-acid chain; its full sequence is Nardilysin (1161 aa).

Residues 1 to 18 form the signal peptide; it reads MLRRVAVAAVFATGRKLR. 2 disordered regions span residues 42–105 and 130–218; these read KPFP…KSPS and VEGK…KKTT. Residues Ser85, Ser91, and Ser93 each carry the phosphoserine modification. The segment covering 138–209 has biased composition (acidic residues); sequence TDEEEEEEEE…EENELEELEE (72 aa). Zn(2+) is bound at residue His244. Glu247 acts as the Proton acceptor in catalysis. Zn(2+) contacts are provided by His248 and Glu325.

Belongs to the peptidase M16 family. Interacts with BACE1 and NRG1. It depends on Zn(2+) as a cofactor. In terms of tissue distribution, testis, and in a lower level in brain, heart and adrenal glands.

It localises to the mitochondrion. Its subcellular location is the cell projection. The protein localises to the dendrite. It catalyses the reaction Hydrolysis of polypeptides, preferably at -Xaa-|-Arg-Lys-, and less commonly at -Arg-|-Arg-Xaa-, in which Xaa is not Arg or Lys.. Functionally, cleaves peptide substrates on the N-terminus of arginine residues in dibasic pairs. Is a critical activator of BACE1- and ADAM17-mediated pro-neuregulin ectodomain shedding, involved in the positive regulation of axonal maturation and myelination. Required for proper functioning of 2-oxoglutarate dehydrogenase (OGDH). The chain is Nardilysin from Rattus norvegicus (Rat).